Reading from the N-terminus, the 362-residue chain is Metacaspase-3 (362 aa).

Active-site residues include His174 and Cys230.

This sequence belongs to the peptidase C14B family.

The chain is Metacaspase-3 (AMC3) from Arabidopsis thaliana (Mouse-ear cress).